The chain runs to 778 residues: Probable cation-transporting ATPase exp7 (778 aa).

The Cytoplasmic portion of the chain corresponds to 1-37 (MDKNKIMGLTQREVKERQAEGLVNDFTASASTSTWQI). The helical transmembrane segment at 38-57 (VKRNVFTLFNALNFAIALAL) threads the bilayer. Residues 58-64 (AFVQAWS) are Extracellular-facing. A helical transmembrane segment spans residues 65-84 (NLVFFAVICFNAFSGIVTEL). The Cytoplasmic portion of the chain corresponds to 85 to 209 (RAKHMVDKLN…PINSRIMKSL (125 aa)). The helical transmembrane segment at 210 to 229 (DKLAGFTGKIIIPFGLALLL) threads the bilayer. Topologically, residues 230 to 242 (EALLLKGLPLKSS) are extracellular. The helical transmembrane segment at 243 to 260 (VVNSSTALLGMLPKGIAL) threads the bilayer. At 261 to 586 (LTITSLLTAV…FEGRRVVNNI (326 aa)) the chain is on the cytoplasmic side. Catalysis depends on aspartate 298, which acts as the 4-aspartylphosphate intermediate. Residues aspartate 532 and aspartate 536 each contribute to the Mg(2+) site. A helical transmembrane segment spans residues 587–606 (AHIAPIFLIKTIYSFLLAVI). Residues 607–624 (CIASALLGRSEWILIFPF) lie on the Extracellular side of the membrane. A helical transmembrane segment spans residues 625-645 (IPIQITMIDQFVEGFPPFVLT). Over 646 to 663 (FERNIKPVEQNFLRKSML) the chain is Cytoplasmic. A helical transmembrane segment spans residues 664-684 (RALPSALMVVFSVLFVKMFGA). Residues 685 to 689 (SQGWS) are Extracellular-facing. A helical transmembrane segment spans residues 690-708 (ELEISTLLYYLLGSIGFLS). The Cytoplasmic segment spans residues 709 to 716 (VFRACMPF). A helical membrane pass occupies residues 717-739 (TLWRVLLIVWSVGGFLATALFPR). At 740-757 (IQKLLEISTLTEQTLPVY) the chain is on the extracellular side. A helical transmembrane segment spans residues 758–777 (GVMMLVFTVIFILTSRYQAK). Lysine 778 is a topological domain (cytoplasmic).

It belongs to the cation transport ATPase (P-type) (TC 3.A.3) family.

It is found in the cell membrane. It catalyses the reaction ATP + H2O = ADP + phosphate + H(+). In Streptococcus pneumoniae serotype 4 (strain ATCC BAA-334 / TIGR4), this protein is Probable cation-transporting ATPase exp7 (exp7).